The following is a 97-amino-acid chain: Large ribosomal subunit protein uL23 (97 aa).

Belongs to the universal ribosomal protein uL23 family. Part of the 50S ribosomal subunit. Contacts protein L29, and trigger factor when it is bound to the ribosome.

One of the early assembly proteins it binds 23S rRNA. One of the proteins that surrounds the polypeptide exit tunnel on the outside of the ribosome. Forms the main docking site for trigger factor binding to the ribosome. This Chelativorans sp. (strain BNC1) protein is Large ribosomal subunit protein uL23.